A 544-amino-acid polypeptide reads, in one-letter code: Chaperonin GroEL (544 aa).

Residues 29-32 (TLGP), 86-90 (DGTTT), G413, 476-478 (NAA), and D492 each bind ATP.

This sequence belongs to the chaperonin (HSP60) family. As to quaternary structure, forms a cylinder of 14 subunits composed of two heptameric rings stacked back-to-back. Interacts with the co-chaperonin GroES.

It localises to the cytoplasm. It catalyses the reaction ATP + H2O + a folded polypeptide = ADP + phosphate + an unfolded polypeptide.. Functionally, together with its co-chaperonin GroES, plays an essential role in assisting protein folding. The GroEL-GroES system forms a nano-cage that allows encapsulation of the non-native substrate proteins and provides a physical environment optimized to promote and accelerate protein folding. This is Chaperonin GroEL from Bacillus mycoides (strain KBAB4) (Bacillus weihenstephanensis).